A 193-amino-acid polypeptide reads, in one-letter code: Surfactant protein C (193 aa).

Positions methionine 1–glutamine 23 are excised as a propeptide. S-palmitoyl cysteine attachment occurs at residues cysteine 28 and cysteine 29. A propeptide spanning residues histidine 59 to isoleucine 193 is cleaved from the precursor. The BRICHOS domain occupies phenylalanine 94 to isoleucine 193. The cysteines at positions 121 and 185 are disulfide-linked. Residues lysine 147 to serine 170 are disordered.

It is found in the secreted. It localises to the extracellular space. The protein resides in the surface film. Functionally, pulmonary surfactant associated proteins promote alveolar stability by lowering the surface tension at the air-liquid interface in the peripheral air spaces. The protein is Surfactant protein C of Mus musculus (Mouse).